Reading from the N-terminus, the 265-residue chain is MPEPTFHELAQLPPPVLRQLIRRGDYTGHTSGLGQRHLQANLVILQKSWADEFLRFCALNPRACPLLDVSEPGSPHFARLGADIDVRSDLPRYRVHRRGQEPVEVSDIGTFWEADFVAFAIGCSFSFEQALLDAGIGLRHLELGRNVTMYRSSIATRPSGRLAGPTVVSMRPLKAAEAIRAIQVTSRFPMTHGAPLHLGDPALIGIRDLARPDYGDPVPLAADEIPLFWACGVTPQAVLAEVQPELYISHAPGHMLVSDRLYDEL.

This sequence belongs to the D-glutamate cyclase family.

The protein is Putative hydro-lyase PA2116 of Pseudomonas aeruginosa (strain ATCC 15692 / DSM 22644 / CIP 104116 / JCM 14847 / LMG 12228 / 1C / PRS 101 / PAO1).